The following is a 176-amino-acid chain: ATP-dependent protease subunit HslV (176 aa).

The active site involves Thr5. Na(+)-binding residues include Ser161, Cys164, and Thr167.

Belongs to the peptidase T1B family. HslV subfamily. A double ring-shaped homohexamer of HslV is capped on each side by a ring-shaped HslU homohexamer. The assembly of the HslU/HslV complex is dependent on binding of ATP.

The protein resides in the cytoplasm. It carries out the reaction ATP-dependent cleavage of peptide bonds with broad specificity.. With respect to regulation, allosterically activated by HslU binding. Functionally, protease subunit of a proteasome-like degradation complex believed to be a general protein degrading machinery. This Thermoanaerobacter pseudethanolicus (strain ATCC 33223 / 39E) (Clostridium thermohydrosulfuricum) protein is ATP-dependent protease subunit HslV.